We begin with the raw amino-acid sequence, 71 residues long: Antitoxin VapB22 (71 aa).

The protein belongs to the phD/YefM antitoxin family.

Its function is as follows. Antitoxin component of a type II toxin-antitoxin (TA) system. Upon expression in M.smegmatis neutralizes the effect of cognate toxin VapC22. This is Antitoxin VapB22 (vapB22) from Mycobacterium tuberculosis (strain ATCC 25618 / H37Rv).